Consider the following 938-residue polypeptide: Isoleucine--tRNA ligase (938 aa).

Positions 58–68 (PYANGSIHIGH) match the 'HIGH' region motif. An N6-acetyllysine modification is found at Lys-183. Glu-561 contributes to the L-isoleucyl-5'-AMP binding site. The short motif at 602-606 (KMSKS) is the 'KMSKS' region element. Lys-605 contacts ATP. Positions 901, 904, 921, and 924 each coordinate Zn(2+).

It belongs to the class-I aminoacyl-tRNA synthetase family. IleS type 1 subfamily. Monomer. Zn(2+) serves as cofactor.

It is found in the cytoplasm. The catalysed reaction is tRNA(Ile) + L-isoleucine + ATP = L-isoleucyl-tRNA(Ile) + AMP + diphosphate. Functionally, catalyzes the attachment of isoleucine to tRNA(Ile). As IleRS can inadvertently accommodate and process structurally similar amino acids such as valine, to avoid such errors it has two additional distinct tRNA(Ile)-dependent editing activities. One activity is designated as 'pretransfer' editing and involves the hydrolysis of activated Val-AMP. The other activity is designated 'posttransfer' editing and involves deacylation of mischarged Val-tRNA(Ile). The protein is Isoleucine--tRNA ligase of Escherichia fergusonii (strain ATCC 35469 / DSM 13698 / CCUG 18766 / IAM 14443 / JCM 21226 / LMG 7866 / NBRC 102419 / NCTC 12128 / CDC 0568-73).